The sequence spans 253 residues: Purine nucleoside phosphorylase DR_1966 (253 aa).

The Zn(2+) site is built by His72, Cys106, and His123.

It belongs to the purine nucleoside phosphorylase YfiH/LACC1 family. Homodimer. Cu(2+) serves as cofactor. The cofactor is Zn(2+).

The enzyme catalyses adenosine + phosphate = alpha-D-ribose 1-phosphate + adenine. It carries out the reaction S-methyl-5'-thioadenosine + phosphate = 5-(methylsulfanyl)-alpha-D-ribose 1-phosphate + adenine. It catalyses the reaction inosine + phosphate = alpha-D-ribose 1-phosphate + hypoxanthine. The catalysed reaction is adenosine + H2O + H(+) = inosine + NH4(+). Purine nucleoside enzyme that catalyzes the phosphorolysis of adenosine and inosine nucleosides, yielding D-ribose 1-phosphate and the respective free bases, adenine and hypoxanthine. Also catalyzes the phosphorolysis of S-methyl-5'-thioadenosine into adenine and S-methyl-5-thio-alpha-D-ribose 1-phosphate. Also has adenosine deaminase activity. In Deinococcus radiodurans (strain ATCC 13939 / DSM 20539 / JCM 16871 / CCUG 27074 / LMG 4051 / NBRC 15346 / NCIMB 9279 / VKM B-1422 / R1), this protein is Purine nucleoside phosphorylase DR_1966.